Here is a 149-residue protein sequence, read N- to C-terminus: Arginine repressor (149 aa).

It belongs to the ArgR family.

The protein localises to the cytoplasm. Its pathway is amino-acid biosynthesis; L-arginine biosynthesis [regulation]. Its function is as follows. Regulates arginine biosynthesis genes. The protein is Arginine repressor of Bacillus pumilus (strain SAFR-032).